The chain runs to 1691 residues: Protein TIC 214 (1691 aa).

A run of 6 helical transmembrane segments spans residues 19 to 39 (MLLG…SQIL), 60 to 80 (VLAQ…LLLL), 84 to 104 (LLTI…KDFP), 123 to 143 (LFLI…NSVL), 158 to 178 (TVFM…FNFF), and 200 to 220 (FIYA…LGRA). The disordered stretch occupies residues 819 to 839 (EKQHTLQRKHKEIGSKSRELK).

The protein belongs to the TIC214 family. As to quaternary structure, part of the Tic complex.

It localises to the plastid. The protein resides in the chloroplast inner membrane. Its function is as follows. Involved in protein precursor import into chloroplasts. May be part of an intermediate translocation complex acting as a protein-conducting channel at the inner envelope. This is Protein TIC 214 from Adiantum capillus-veneris (Maidenhair fern).